We begin with the raw amino-acid sequence, 62 residues long: Large ribosomal subunit protein bL28 (62 aa).

A disordered region spans residues 1–28 (MARVCAITGRKARSGNSRSHAMNATKRK).

It belongs to the bacterial ribosomal protein bL28 family.

The polypeptide is Large ribosomal subunit protein bL28 (Bacillus thuringiensis (strain Al Hakam)).